Here is a 1280-residue protein sequence, read N- to C-terminus: Ankyrin repeat and sterile alpha motif domain-containing protein 1B (1280 aa).

ANK repeat units follow at residues 2–31, 57–86, 90–119, 126–155, 159–188, 192–221, and 224–253; these read GKEQ…GLLG, SGYT…STNV, KGCF…SHSR, EKET…DPSM, RGET…NLMS, RKHT…DVNT, and EKGS…DANI. Disordered regions lie at residues 299-322, 361-399, 479-573, 704-723, and 755-791; these read RHRP…LRHK, MESF…EEKS, SVSD…STGS, NGEA…SNTG, and SNLV…PSFT. The span at 482–491 shows a compositional bias: basic and acidic residues; sequence DAERGNHGDD. Composition is skewed to polar residues over residues 520–550, 707–723, and 770–782; these read KQRT…SSLG, ARSN…SNTG, and SRGQ…SSPS. 2 SAM domains span residues 824–890 and 898–963; these read CPVQ…LPRV and NNPT…RLHE. Disordered regions lie at residues 960–994 and 1208–1243; these read RLHE…LSQA and GSST…MDQK. The span at 980–994 shows a compositional bias: polar residues; that stretch reads GNHTPPQLSPSLSQA. The PID domain maps to 1071–1223; that stretch reads IFQSCDYEAY…ESFDSKPSKP (153 aa).

It is found in the cytoplasm. The chain is Ankyrin repeat and sterile alpha motif domain-containing protein 1B (anks1b) from Danio rerio (Zebrafish).